We begin with the raw amino-acid sequence, 406 residues long: Phosphopentomutase (406 aa).

Asp10, Asp305, His310, Asp346, His347, and His358 together coordinate Mn(2+).

The protein belongs to the phosphopentomutase family. It depends on Mn(2+) as a cofactor.

Its subcellular location is the cytoplasm. The enzyme catalyses 2-deoxy-alpha-D-ribose 1-phosphate = 2-deoxy-D-ribose 5-phosphate. It catalyses the reaction alpha-D-ribose 1-phosphate = D-ribose 5-phosphate. The protein operates within carbohydrate degradation; 2-deoxy-D-ribose 1-phosphate degradation; D-glyceraldehyde 3-phosphate and acetaldehyde from 2-deoxy-alpha-D-ribose 1-phosphate: step 1/2. Functionally, isomerase that catalyzes the conversion of deoxy-ribose 1-phosphate (dRib-1-P) and ribose 1-phosphate (Rib-1-P) to deoxy-ribose 5-phosphate (dRib-5-P) and ribose 5-phosphate (Rib-5-P), respectively. The polypeptide is Phosphopentomutase (Vibrio campbellii (strain ATCC BAA-1116)).